The primary structure comprises 137 residues: Aspartate 1-decarboxylase (137 aa).

S25 (schiff-base intermediate with substrate; via pyruvic acid) is an active-site residue. At S25 the chain carries Pyruvic acid (Ser). T57 contacts substrate. Y58 (proton donor) is an active-site residue. 73–75 (GAA) contributes to the substrate binding site.

This sequence belongs to the PanD family. As to quaternary structure, heterooctamer of four alpha and four beta subunits. The cofactor is pyruvate. Post-translationally, is synthesized initially as an inactive proenzyme, which is activated by self-cleavage at a specific serine bond to produce a beta-subunit with a hydroxyl group at its C-terminus and an alpha-subunit with a pyruvoyl group at its N-terminus.

Its subcellular location is the cytoplasm. The enzyme catalyses L-aspartate + H(+) = beta-alanine + CO2. It functions in the pathway cofactor biosynthesis; (R)-pantothenate biosynthesis; beta-alanine from L-aspartate: step 1/1. Its function is as follows. Catalyzes the pyruvoyl-dependent decarboxylation of aspartate to produce beta-alanine. The polypeptide is Aspartate 1-decarboxylase (Thermobifida fusca (strain YX)).